The following is a 158-amino-acid chain: Cyclic pyranopterin monophosphate synthase (158 aa).

Substrate is bound by residues 75-77 and 113-114; these read LCH and ME. Residue Asp-128 is part of the active site.

This sequence belongs to the MoaC family. As to quaternary structure, homohexamer; trimer of dimers.

The catalysed reaction is (8S)-3',8-cyclo-7,8-dihydroguanosine 5'-triphosphate = cyclic pyranopterin phosphate + diphosphate. Its pathway is cofactor biosynthesis; molybdopterin biosynthesis. Catalyzes the conversion of (8S)-3',8-cyclo-7,8-dihydroguanosine 5'-triphosphate to cyclic pyranopterin monophosphate (cPMP). This Ralstonia pickettii (strain 12J) protein is Cyclic pyranopterin monophosphate synthase.